The following is a 165-amino-acid chain: Fimbrial protein (165 aa).

The signal sequence occupies residues 1-21 (MRKSASAVAVLALIACGSAHA).

It localises to the fimbrium. Functionally, structural subunit of the sef14 fimbriae. This Salmonella enteritidis protein is Fimbrial protein (sefA).